The following is a 342-amino-acid chain: uncharacterized protein (342 aa).

An N-terminal signal peptide occupies residues 1 to 18 (MWKKLMLLLLMAIPLVSA).

This is an uncharacterized protein from Methanocaldococcus jannaschii (strain ATCC 43067 / DSM 2661 / JAL-1 / JCM 10045 / NBRC 100440) (Methanococcus jannaschii).